A 227-amino-acid polypeptide reads, in one-letter code: Cytochrome c oxidase subunit 2 (227 aa).

Over 1–26 (MATWSNFNLQNSASPLMEQIIFFHDH) the chain is Mitochondrial intermembrane. The helical transmembrane segment at 27–51 (TLVILIMITILVGYLMISLFFNSYI) threads the bilayer. Residues 52-62 (NRFLLEGQMIE) are Mitochondrial matrix-facing. The helical transmembrane segment at 63–81 (LIWTILPAITLIFIALPSL) threads the bilayer. Topologically, residues 82–227 (RLLYLLDELN…NFINWINNYS (146 aa)) are mitochondrial intermembrane. Positions 161, 196, 198, 200, 204, and 207 each coordinate Cu cation. E198 contacts Mg(2+).

This sequence belongs to the cytochrome c oxidase subunit 2 family. As to quaternary structure, component of the cytochrome c oxidase (complex IV, CIV), a multisubunit enzyme composed of a catalytic core of 3 subunits and several supernumerary subunits. The complex exists as a monomer or a dimer and forms supercomplexes (SCs) in the inner mitochondrial membrane with ubiquinol-cytochrome c oxidoreductase (cytochrome b-c1 complex, complex III, CIII). Cu cation is required as a cofactor.

Its subcellular location is the mitochondrion inner membrane. It catalyses the reaction 4 Fe(II)-[cytochrome c] + O2 + 8 H(+)(in) = 4 Fe(III)-[cytochrome c] + 2 H2O + 4 H(+)(out). Its function is as follows. Component of the cytochrome c oxidase, the last enzyme in the mitochondrial electron transport chain which drives oxidative phosphorylation. The respiratory chain contains 3 multisubunit complexes succinate dehydrogenase (complex II, CII), ubiquinol-cytochrome c oxidoreductase (cytochrome b-c1 complex, complex III, CIII) and cytochrome c oxidase (complex IV, CIV), that cooperate to transfer electrons derived from NADH and succinate to molecular oxygen, creating an electrochemical gradient over the inner membrane that drives transmembrane transport and the ATP synthase. Cytochrome c oxidase is the component of the respiratory chain that catalyzes the reduction of oxygen to water. Electrons originating from reduced cytochrome c in the intermembrane space (IMS) are transferred via the dinuclear copper A center (CU(A)) of subunit 2 and heme A of subunit 1 to the active site in subunit 1, a binuclear center (BNC) formed by heme A3 and copper B (CU(B)). The BNC reduces molecular oxygen to 2 water molecules using 4 electrons from cytochrome c in the IMS and 4 protons from the mitochondrial matrix. The protein is Cytochrome c oxidase subunit 2 (COII) of Choristoneura rosaceana (Oblique banded leafroller).